Here is a 480-residue protein sequence, read N- to C-terminus: Proline--tRNA ligase (480 aa).

The protein belongs to the class-II aminoacyl-tRNA synthetase family. ProS type 3 subfamily. Homodimer.

Its subcellular location is the cytoplasm. It catalyses the reaction tRNA(Pro) + L-proline + ATP = L-prolyl-tRNA(Pro) + AMP + diphosphate. Its function is as follows. Catalyzes the attachment of proline to tRNA(Pro) in a two-step reaction: proline is first activated by ATP to form Pro-AMP and then transferred to the acceptor end of tRNA(Pro). In Methanosarcina mazei (strain ATCC BAA-159 / DSM 3647 / Goe1 / Go1 / JCM 11833 / OCM 88) (Methanosarcina frisia), this protein is Proline--tRNA ligase.